A 762-amino-acid chain; its full sequence is N,N-dimethylformamidase beta subunit (762 aa).

Heterotetramer of two DmfA1 (alpha) and two DmfA2 (beta) subunits.

It catalyses the reaction N,N-dimethylformamide + H2O = dimethylamine + formate. Its function is as follows. Hydrolyzes N,N-dimethylformamide, and to a lesser extent N,N-dimethylacetamide and N,N-diethylacetamide. Has no activity against the substituted amides N-methylformamide, N-ethylformamide, N-ethylformamide and N-methylacetamide or the unsubstituted amides formamide, nicotinamide, acetoamide, benzamide, acetamide and acrylamide. In Paracoccus aminophilus, this protein is N,N-dimethylformamidase beta subunit.